The primary structure comprises 563 residues: BOS complex subunit NCLN (563 aa).

Positions 1–42 (MLEEAGEVLENMLKASCLPLGFIVFLPAVLLLVAPPLPAADA) are cleaved as a signal peptide. The Lumenal segment spans residues 43–522 (AHEFTVYRMQ…VMNAYRVKPA (480 aa)). N-linked (GlcNAc...) asparagine glycosylation is found at N241 and N428. The chain crosses the membrane as a helical span at residues 523 to 543 (IFDLLLAVCIGAYLGMAYTAV). The Cytoplasmic segment spans residues 544–563 (QHFDLLYKTVQRLLVKAKTQ).

It belongs to the nicastrin family. Component of the back of Sec61 (BOS) complex, composed of NCLN/Nicalin, NOMO1 and TMEM147. The BOS complex is part of the multi-pass translocon (MPT) complex, composed of three subcomplexes, the GEL complex (composed of RAB5IF/OPTI and TMCO1), the BOS complex (composed of NCLN/Nicalin, NOMO1 and TMEM147) and the PAT complex (composed of WDR83OS/Asterix and CCDC47). The MPT complex associates with the SEC61 complex.

Its subcellular location is the endoplasmic reticulum membrane. Functionally, component of the multi-pass translocon (MPT) complex that mediates insertion of multi-pass membrane proteins into the lipid bilayer of membranes. The MPT complex takes over after the SEC61 complex: following membrane insertion of the first few transmembrane segments of proteins by the SEC61 complex, the MPT complex occludes the lateral gate of the SEC61 complex to promote insertion of subsequent transmembrane regions. May antagonize Nodal signaling and subsequent organization of axial structures during mesodermal patterning, via its interaction with NOMO. In Canis lupus familiaris (Dog), this protein is BOS complex subunit NCLN.